Consider the following 448-residue polypeptide: Fibulin-5 (448 aa).

An N-terminal signal peptide occupies residues 1–23; sequence MPGLKRILTVTILALWLPHPGNA. An EGF-like 1; calcium-binding domain is found at 42–82; it reads DIDECRTIPEACRGDMMCVNQNGGYLCIPRTNPVYRGPYSN. Disulfide bonds link Cys-46–Cys-59, Cys-53–Cys-68, Cys-131–Cys-144, Cys-138–Cys-153, Cys-155–Cys-166, Cys-172–Cys-181, Cys-177–Cys-190, Cys-192–Cys-205, Cys-211–Cys-221, Cys-217–Cys-230, Cys-232–Cys-245, Cys-251–Cys-262, Cys-258–Cys-271, Cys-273–Cys-286, Cys-292–Cys-305, Cys-299–Cys-314, and Cys-320–Cys-332. The short motif at 54-56 is the Cell attachment site element; it reads RGD. An EGF-like 2; calcium-binding domain is found at 127–167; sequence DVDECATDSHQCNPTQICINTEGGYTCSCTDGYWLLEGQCL. An EGF-like 3; calcium-binding domain is found at 168-206; that stretch reads DIDECRYGYCQQLCANVPGSYSCTCNPGFTLNDDGRSCQ. In terms of domain architecture, EGF-like 4; calcium-binding spans 207–246; the sequence is DVNECETENPCVQTCVNTYGSFICRCDPGYELEEDGIHCS. Residues 245 to 448 are interaction with LOXL1; the sequence is CSDMDECSFS…LRIYVSQYPF (204 aa). The EGF-like 5; calcium-binding domain maps to 247 to 287; the sequence is DMDECSFSEFLCQHECVNQPGSYFCSCPPGYVLLEDNRSCQ. Residues Asn-283 and Asn-296 are each glycosylated (N-linked (GlcNAc...) asparagine). One can recognise an EGF-like 6; calcium-binding domain in the interval 288 to 333; sequence DINECEHRNHTCTPLQTCYNLQGGFKCIDPIVCEEPYLLIGDNRCM.

The protein belongs to the fibulin family. In terms of assembly, homodimer. Monomer, homodimerizes in presence of Ca(2+). Interacts with ELN. Interacts (via N-terminus) with the integrins ITGAV/ITGB3, ITGAV/ITGB5 and ITGA9/ITGB1. Interacts with FBN1 (via N-terminal domain). Forms a ternary complex with ELN and FBN1. Interacts with EFEMP2 with moderate affinity. Interacts with LOXL1. N-glycosylated.

Its subcellular location is the secreted. The protein resides in the extracellular space. The protein localises to the extracellular matrix. In terms of biological role, essential for elastic fiber formation, is involved in the assembly of continuous elastin (ELN) polymer and promotes the interaction of microfibrils and ELN. Stabilizes and organizes elastic fibers in the skin, lung and vasculature. Promotes adhesion of endothelial cells through interaction of integrins and the RGD motif. Vascular ligand for integrin receptors which may play a role in vascular development and remodeling. May act as an adapter that mediates the interaction between FBN1 and ELN. The chain is Fibulin-5 (Fbln5) from Rattus norvegicus (Rat).